Here is a 90-residue protein sequence, read N- to C-terminus: MGEQSFVVHVWGQVQGVGFRYFTRERALQLGLRGYAYNLADGSVEILICGPEQGVQMMLGWLEHGPRTAEVTRMEYEEAPPPQKGGFHTN.

One can recognise an Acylphosphatase-like domain in the interval 5–90 (SFVVHVWGQV…PPQKGGFHTN (86 aa)). Residues Arg20 and Asn38 contribute to the active site.

Belongs to the acylphosphatase family.

The enzyme catalyses an acyl phosphate + H2O = a carboxylate + phosphate + H(+). The chain is Acylphosphatase (acyP) from Aeromonas salmonicida (strain A449).